Reading from the N-terminus, the 166-residue chain is UPF0561 protein C2orf68 homolog (166 aa).

Basic and acidic residues predominate over residues 36-49 (RDDYDKKVKQAAKE). A disordered region spans residues 36-108 (RDDYDKKVKQ…EPEPPGHQLF (73 aa)).

Belongs to the UPF0561 family.

This chain is UPF0561 protein C2orf68 homolog, found in Bos taurus (Bovine).